The chain runs to 290 residues: Nucleoid occlusion protein (290 aa).

A DNA-binding region (H-T-H motif) is located at residues 153-172; sequence EALAQRLGKGQSTIANKLRL.

Belongs to the ParB family.

It localises to the cytoplasm. It is found in the nucleoid. Its function is as follows. Effects nucleoid occlusion by binding relatively nonspecifically to DNA and preventing the assembly of the division machinery in the vicinity of the nucleoid, especially under conditions that disturb the cell cycle. It helps to coordinate cell division and chromosome segregation by preventing the formation of the Z ring through the nucleoid, which would cause chromosome breakage. This chain is Nucleoid occlusion protein, found in Bacillus cytotoxicus (strain DSM 22905 / CIP 110041 / 391-98 / NVH 391-98).